A 75-amino-acid polypeptide reads, in one-letter code: Small ribosomal subunit protein bS18 (75 aa).

This sequence belongs to the bacterial ribosomal protein bS18 family. In terms of assembly, part of the 30S ribosomal subunit. Forms a tight heterodimer with protein bS6.

In terms of biological role, binds as a heterodimer with protein bS6 to the central domain of the 16S rRNA, where it helps stabilize the platform of the 30S subunit. This is Small ribosomal subunit protein bS18 from Buchnera aphidicola subsp. Baizongia pistaciae (strain Bp).